The following is a 275-amino-acid chain: Large ribosomal subunit protein uL2 (275 aa).

Disordered stretches follow at residues 35–55 and 223–260; these read EKQT…RHKG and VAMN…KTRN. Polar residues predominate over residues 39–49; it reads RSSGRNNQGRV.

Belongs to the universal ribosomal protein uL2 family. Part of the 50S ribosomal subunit. Forms a bridge to the 30S subunit in the 70S ribosome.

Functionally, one of the primary rRNA binding proteins. Required for association of the 30S and 50S subunits to form the 70S ribosome, for tRNA binding and peptide bond formation. It has been suggested to have peptidyltransferase activity; this is somewhat controversial. Makes several contacts with the 16S rRNA in the 70S ribosome. The polypeptide is Large ribosomal subunit protein uL2 (Methylococcus capsulatus (strain ATCC 33009 / NCIMB 11132 / Bath)).